A 253-amino-acid polypeptide reads, in one-letter code: Chorismate mutase 2, cytosolic (253 aa).

One can recognise a Chorismate mutase domain in the interval D2 to D253.

Homodimer. Interacts with Cmu1 of the fungal pathogen Ustilago maydis.

Its subcellular location is the cytoplasm. It is found in the cytosol. It carries out the reaction chorismate = prephenate. The protein operates within metabolic intermediate biosynthesis; prephenate biosynthesis; prephenate from chorismate: step 1/1. With respect to regulation, no allosteric regulation. This Zea mays (Maize) protein is Chorismate mutase 2, cytosolic.